The chain runs to 159 residues: ATP synthase subunit b (159 aa).

The helical transmembrane segment at 4-24 (VGINGTLIVQLVTFVILVALL) threads the bilayer.

Belongs to the ATPase B chain family. As to quaternary structure, F-type ATPases have 2 components, F(1) - the catalytic core - and F(0) - the membrane proton channel. F(1) has five subunits: alpha(3), beta(3), gamma(1), delta(1), epsilon(1). F(0) has three main subunits: a(1), b(2) and c(10-14). The alpha and beta chains form an alternating ring which encloses part of the gamma chain. F(1) is attached to F(0) by a central stalk formed by the gamma and epsilon chains, while a peripheral stalk is formed by the delta and b chains.

It is found in the cell inner membrane. Functionally, f(1)F(0) ATP synthase produces ATP from ADP in the presence of a proton or sodium gradient. F-type ATPases consist of two structural domains, F(1) containing the extramembraneous catalytic core and F(0) containing the membrane proton channel, linked together by a central stalk and a peripheral stalk. During catalysis, ATP synthesis in the catalytic domain of F(1) is coupled via a rotary mechanism of the central stalk subunits to proton translocation. Its function is as follows. Component of the F(0) channel, it forms part of the peripheral stalk, linking F(1) to F(0). This is ATP synthase subunit b from Acidithiobacillus ferrooxidans (strain ATCC 23270 / DSM 14882 / CIP 104768 / NCIMB 8455) (Ferrobacillus ferrooxidans (strain ATCC 23270)).